Here is a 196-residue protein sequence, read N- to C-terminus: GTP cyclohydrolase-2 (196 aa).

Residue 49–53 coordinates GTP; sequence RVHSE. Zn(2+) contacts are provided by Cys54, Cys65, and Cys67. GTP is bound by residues Gln70, 92-94, and Thr114; that span reads EGR. The Proton acceptor role is filled by Asp126. The Nucleophile role is filled by Arg128. GTP-binding residues include Thr149 and Lys154.

The protein belongs to the GTP cyclohydrolase II family. As to quaternary structure, homodimer. The cofactor is Zn(2+).

The enzyme catalyses GTP + 4 H2O = 2,5-diamino-6-hydroxy-4-(5-phosphoribosylamino)-pyrimidine + formate + 2 phosphate + 3 H(+). It functions in the pathway cofactor biosynthesis; riboflavin biosynthesis; 5-amino-6-(D-ribitylamino)uracil from GTP: step 1/4. Functionally, catalyzes the conversion of GTP to 2,5-diamino-6-ribosylamino-4(3H)-pyrimidinone 5'-phosphate (DARP), formate and pyrophosphate. The protein is GTP cyclohydrolase-2 of Yersinia pestis.